Consider the following 372-residue polypeptide: GTP cyclohydrolase 1 type 2 homolog (372 aa).

A divalent metal cation-binding residues include His-67, His-68, Asp-106, His-332, and Glu-335.

This sequence belongs to the GTP cyclohydrolase I type 2/NIF3 family. In terms of assembly, homohexamer.

The polypeptide is GTP cyclohydrolase 1 type 2 homolog (Halalkalibacterium halodurans (strain ATCC BAA-125 / DSM 18197 / FERM 7344 / JCM 9153 / C-125) (Bacillus halodurans)).